The primary structure comprises 148 residues: Small ribosomal subunit protein eS19G (148 aa).

This sequence belongs to the eukaryotic ribosomal protein eS19 family.

In terms of biological role, elimination of the ALEP-1 gene from all somatic cells in its fully activate state may represent an alternative way to gene regulation. The protein is Small ribosomal subunit protein eS19G (RPS19G) of Ascaris suum (Pig roundworm).